The chain runs to 150 residues: Avidin-related protein 3 (150 aa).

The first 24 residues, 1–24, serve as a signal peptide directing secretion; the sequence is MVHTTSPLLLLLLLSLALVAPSLS. Residues 26–147 form the Avidin-like domain; sequence RKCSLTGKWT…GYNNFTRQRT (122 aa). A disulfide bond links C28 and C105. Residues N36, S40, Y57, T59, and D63 each coordinate biotin. N-linked (GlcNAc...) asparagine glycosylation is present at N93. S95, S99, and N140 together coordinate biotin. N141 carries N-linked (GlcNAc...) asparagine glycosylation.

It belongs to the avidin/streptavidin family. As to quaternary structure, homotetramer. Post-translationally, glycosylated.

Its subcellular location is the secreted. Functionally, forms a strong non-covalent specific complex with biotin. The polypeptide is Avidin-related protein 3 (AVR3) (Gallus gallus (Chicken)).